A 169-amino-acid chain; its full sequence is MWIIILIVIIVIITIIFSKRDVVSQSSLDIQRYMGTWYEIARLPTSFQKGCVNSTANYQLLEPNKIQVTNNCEINGRINSVTGTAIPAANTRIVSGFLTPASLMVNFGYGFSPYNVIFIDENYQYAIVSGGNDTLWILSRFKNINQSTYNQLVTIVYNQGYDVNNLIRN.

Residues 1–18 (MWIIILIVIIVIITIIFS) form the signal peptide.

Belongs to the calycin superfamily. Lipocalin family.

The protein resides in the secreted. It is found in the virion. Could play a role in the transport of a small ligand. The polypeptide is Putative lipocalin R877 (Acanthamoeba polyphaga mimivirus (APMV)).